We begin with the raw amino-acid sequence, 499 residues long: uncharacterized protein (499 aa).

The segment at 10-57 adopts an RING-type; degenerate zinc-finger fold; that stretch reads CGICGQEYSEDEKLLIPRILTECGHTICTGCAGKIKGQSSIIACPFDR. The segment at 101–147 adopts a B box-type; degenerate zinc-finger fold; the sequence is NKNGVCDENTNHHASNYCETCDADLCEECWTWIHSISTLAHHEKKMI.

This is an uncharacterized protein from Caenorhabditis elegans.